The primary structure comprises 231 residues: GTP cyclohydrolase III (231 aa).

This sequence belongs to the archaeal-type GTP cyclohydrolase family.

It carries out the reaction GTP + 3 H2O = 2-amino-5-formylamino-6-(5-phospho-D-ribosylamino)pyrimidin-4(3H)-one + 2 phosphate + 2 H(+). Functionally, catalyzes the formation of 2-amino-5-formylamino-6-ribofuranosylamino-4(3H)-pyrimidinone ribonucleotide monophosphate and inorganic phosphate from GTP. Also has an independent pyrophosphate phosphohydrolase activity. This chain is GTP cyclohydrolase III, found in Saccharolobus solfataricus (strain ATCC 35092 / DSM 1617 / JCM 11322 / P2) (Sulfolobus solfataricus).